The primary structure comprises 271 residues: Urease accessory protein UreD (271 aa).

This sequence belongs to the UreD family. UreD, UreF and UreG form a complex that acts as a GTP-hydrolysis-dependent molecular chaperone, activating the urease apoprotein by helping to assemble the nickel containing metallocenter of UreC. The UreE protein probably delivers the nickel.

The protein localises to the cytoplasm. In terms of biological role, required for maturation of urease via the functional incorporation of the urease nickel metallocenter. This chain is Urease accessory protein UreD, found in Halalkalibacterium halodurans (strain ATCC BAA-125 / DSM 18197 / FERM 7344 / JCM 9153 / C-125) (Bacillus halodurans).